The primary structure comprises 1198 residues: DNA repair protein RAD5 (1198 aa).

Disordered regions lie at residues 1–129 (MSAE…PSAP) and 348–401 (QGVL…EKLD). A compositionally biased stretch (low complexity) spans 45 to 58 (STSSKFSINIASSS). A compositionally biased stretch (basic residues) spans 104 to 117 (PRRKRSLQQAHSHH). The segment covering 118 to 129 (SSSSSSPVPSAP) has biased composition (low complexity). A compositionally biased stretch (acidic residues) spans 386 to 395 (VDDDGEDSGD). The Helicase ATP-binding domain maps to 509 to 737 (PTSQNLSRGG…YSLLHFLRIT (229 aa)). ATP is bound at residue 522–529 (DAMGMGKT). The interval 541 to 564 (EEKPAGNLESQTRDGVEGEIDEEP) is disordered. The short motif at 688-691 (DEAH) is the DEAH box element. An RING-type zinc finger spans residues 920–964 (CELCSNEMFDEVLLPCYHRSCQDCIVEWIGTCEDQNKIASCPSCG). The region spanning 1021–1180 (ALLRQLEEIR…GAKTKETTLA (160 aa)) is the Helicase C-terminal domain.

Belongs to the SNF2/RAD54 helicase family.

It is found in the cytoplasm. Its subcellular location is the nucleus. Probable helicase, member of the UBC2/RAD6 epistasis group. Functions with DNA repair protein RAD18 in error-free postreplication DNA repair. Involved in the maintenance of wild-type rates of instability of simple repetitive sequences such as poly(GT) repeats. Seems to be involved in maintaining a balance which acts in favor of error-prone non-homologous joining during DNA double-strand breaks repairs. In Cryptococcus neoformans var. neoformans serotype D (strain JEC21 / ATCC MYA-565) (Filobasidiella neoformans), this protein is DNA repair protein RAD5 (RAD5).